A 114-amino-acid chain; its full sequence is Protein ORF3 (114 aa).

Hydrophobic stretches follow at residues 6–22 and 33–53; these read CALG…CLCC and AVVG…GLIL. Positions 28–68 are interaction with host HPX; sequence VSRLAAVVGGAAAVPAVVSGVTGLILSPSQSPIFIQPTPLP. Positions 72-114 are homodimerization, and interaction with host AMBP/bikunin; the sequence is PLRPGLDLAFANQPGHLAPLGEIRPSAPPLPPVADLPQPGLRR. The interval 91 to 114 is disordered; sequence LGEIRPSAPPLPPVADLPQPGLRR. The segment at 95–104 is interaction with host SRC, HCK, FYN, PIK3R3 and GRB2; sequence RPSAPPLPPV. The PTAP/PSAP motif signature appears at 96-99; the sequence is PSAP.

Belongs to the hepevirus ORF3 protein family. In terms of assembly, forms homooligomers. Interacts with host SRC, HCK, FYN, PIK3R3 and GRB2 (via SH3 domain); binding does not activate the kinases. Interacts with host AMBP/bikunin and AMBP/alpha-1-microglobulin peptides. Interacts with host HPX/hemopexin. Interacts (when phosphorylated) with capsid protein ORF2. Interacts with host TSG101; this interaction plays a role in viral release from the host cell. Interacts with host SIRPA; this interaction down-regulates the phosphorylation of host IRF3. Palmitoylated in the N-terminus.

The protein localises to the host endoplasmic reticulum membrane. Its subcellular location is the host cytoplasm. The protein resides in the host cytoskeleton. It is found in the virion. It localises to the host cell membrane. Functionally, small multifunctional phosphoprotein involved in virion morphogenesis, egress and counteracting host innate immunity. Plays critical roles in the final steps of viral release by interacting with host TSG101, a member of the vacuolar protein-sorting pathway and using other cellular host proteins involved in vesicle formation pathway. Also acts as a viroporin and forms ion conductive pores allowing viral particle release. Impairs the generation of type I interferon by down-regulating host TLR3 and TLR7 as well as their downstream signaling pathways. Down-regulates the phosphorylation of host IRF3 via the interaction with host SIRP-alpha, thereby inhibiting IFN-I expression. Interacts with host microtubules. This chain is Protein ORF3, found in Hepatitis E virus genotype 2 (isolate Human/Mexico) (HEV-2).